The sequence spans 116 residues: Putative membrane protein insertion efficiency factor (116 aa).

This sequence belongs to the UPF0161 family.

It is found in the cell inner membrane. Functionally, could be involved in insertion of integral membrane proteins into the membrane. This chain is Putative membrane protein insertion efficiency factor, found in Bartonella tribocorum (strain CIP 105476 / IBS 506).